We begin with the raw amino-acid sequence, 578 residues long: Proline--tRNA ligase (578 aa).

It belongs to the class-II aminoacyl-tRNA synthetase family. ProS type 1 subfamily. As to quaternary structure, homodimer.

It is found in the cytoplasm. It catalyses the reaction tRNA(Pro) + L-proline + ATP = L-prolyl-tRNA(Pro) + AMP + diphosphate. Catalyzes the attachment of proline to tRNA(Pro) in a two-step reaction: proline is first activated by ATP to form Pro-AMP and then transferred to the acceptor end of tRNA(Pro). As ProRS can inadvertently accommodate and process non-cognate amino acids such as alanine and cysteine, to avoid such errors it has two additional distinct editing activities against alanine. One activity is designated as 'pretransfer' editing and involves the tRNA(Pro)-independent hydrolysis of activated Ala-AMP. The other activity is designated 'posttransfer' editing and involves deacylation of mischarged Ala-tRNA(Pro). The misacylated Cys-tRNA(Pro) is not edited by ProRS. The chain is Proline--tRNA ligase from Burkholderia pseudomallei (strain 668).